Here is a 283-residue protein sequence, read N- to C-terminus: Isochorismatase domain-containing protein 1 (283 aa).

It belongs to the isochorismatase family.

The polypeptide is Isochorismatase domain-containing protein 1 (isoc1) (Danio rerio (Zebrafish)).